Reading from the N-terminus, the 364-residue chain is Aminomethyltransferase (364 aa).

Belongs to the GcvT family. As to quaternary structure, the glycine cleavage system is composed of four proteins: P, T, L and H.

It carries out the reaction N(6)-[(R)-S(8)-aminomethyldihydrolipoyl]-L-lysyl-[protein] + (6S)-5,6,7,8-tetrahydrofolate = N(6)-[(R)-dihydrolipoyl]-L-lysyl-[protein] + (6R)-5,10-methylene-5,6,7,8-tetrahydrofolate + NH4(+). In terms of biological role, the glycine cleavage system catalyzes the degradation of glycine. This chain is Aminomethyltransferase, found in Citrobacter koseri (strain ATCC BAA-895 / CDC 4225-83 / SGSC4696).